We begin with the raw amino-acid sequence, 261 residues long: Cytochrome c oxidase subunit 3 (261 aa).

Topologically, residues 1–15 (MAHQAHAYHMVDPSP) are mitochondrial matrix. A helical membrane pass occupies residues 16 to 34 (WPLTGAIAALLLTSGTAVW). Topologically, residues 35-40 (FHFHSL) are mitochondrial intermembrane. The chain crosses the membrane as a helical span at residues 41 to 66 (TLLTLGNVLLLLTMYQWWRDIIREGT). The Mitochondrial matrix segment spans residues 67–72 (FQGHHT). Residues 73–105 (PPVQKGLRYGMILFITSEVFFFLGFFWAFYHAS) form a helical membrane-spanning segment. The Mitochondrial intermembrane portion of the chain corresponds to 106 to 128 (LAPTPELGGCWPPTGITTLDPFE). A helical membrane pass occupies residues 129–152 (VPLLNTAVLLASGVTVTWAHHSIM). Topologically, residues 153 to 155 (EGE) are mitochondrial matrix. The helical transmembrane segment at 156–183 (RKQTIQALTLTILLGFYFTFLQGMEYYE) threads the bilayer. The Mitochondrial intermembrane segment spans residues 184–190 (APFTIAD). Residues 191 to 223 (GVYGSTFFVATGFHGLHVIIGSTFLAVCLLRQV) form a helical membrane-spanning segment. The Mitochondrial matrix portion of the chain corresponds to 224–232 (QYHFTSEHH). Residues 233-256 (FGFEAAAWYWHFVDVVWLFLYVSI) form a helical membrane-spanning segment. The Mitochondrial intermembrane segment spans residues 257–261 (YWWGS).

The protein belongs to the cytochrome c oxidase subunit 3 family. In terms of assembly, component of the cytochrome c oxidase (complex IV, CIV), a multisubunit enzyme composed of 14 subunits. The complex is composed of a catalytic core of 3 subunits MT-CO1, MT-CO2 and MT-CO3, encoded in the mitochondrial DNA, and 11 supernumerary subunits COX4I, COX5A, COX5B, COX6A, COX6B, COX6C, COX7A, COX7B, COX7C, COX8 and NDUFA4, which are encoded in the nuclear genome. The complex exists as a monomer or a dimer and forms supercomplexes (SCs) in the inner mitochondrial membrane with NADH-ubiquinone oxidoreductase (complex I, CI) and ubiquinol-cytochrome c oxidoreductase (cytochrome b-c1 complex, complex III, CIII), resulting in different assemblies (supercomplex SCI(1)III(2)IV(1) and megacomplex MCI(2)III(2)IV(2)).

Its subcellular location is the mitochondrion inner membrane. It carries out the reaction 4 Fe(II)-[cytochrome c] + O2 + 8 H(+)(in) = 4 Fe(III)-[cytochrome c] + 2 H2O + 4 H(+)(out). In terms of biological role, component of the cytochrome c oxidase, the last enzyme in the mitochondrial electron transport chain which drives oxidative phosphorylation. The respiratory chain contains 3 multisubunit complexes succinate dehydrogenase (complex II, CII), ubiquinol-cytochrome c oxidoreductase (cytochrome b-c1 complex, complex III, CIII) and cytochrome c oxidase (complex IV, CIV), that cooperate to transfer electrons derived from NADH and succinate to molecular oxygen, creating an electrochemical gradient over the inner membrane that drives transmembrane transport and the ATP synthase. Cytochrome c oxidase is the component of the respiratory chain that catalyzes the reduction of oxygen to water. Electrons originating from reduced cytochrome c in the intermembrane space (IMS) are transferred via the dinuclear copper A center (CU(A)) of subunit 2 and heme A of subunit 1 to the active site in subunit 1, a binuclear center (BNC) formed by heme A3 and copper B (CU(B)). The BNC reduces molecular oxygen to 2 water molecules using 4 electrons from cytochrome c in the IMS and 4 protons from the mitochondrial matrix. In Oncorhynchus masou (Cherry salmon), this protein is Cytochrome c oxidase subunit 3 (mt-co3).